The primary structure comprises 508 residues: Photosystem II CP47 reaction center protein (508 aa).

The next 6 membrane-spanning stretches (helical) occupy residues 21–36, 101–115, 140–156, 203–218, 237–252, and 457–472; these read AVHI…WAGS, IVFS…IWHW, GIHL…FGAF, IAAG…FHLS, VLSS…AFVV, and SFAL…HGAR.

Belongs to the PsbB/PsbC family. PsbB subfamily. In terms of assembly, PSII is composed of 1 copy each of membrane proteins PsbA, PsbB, PsbC, PsbD, PsbE, PsbF, PsbH, PsbI, PsbJ, PsbK, PsbL, PsbM, PsbT, PsbX, PsbY, PsbZ, Psb30/Ycf12, at least 3 peripheral proteins of the oxygen-evolving complex and a large number of cofactors. It forms dimeric complexes. The cofactor is Binds multiple chlorophylls. PSII binds additional chlorophylls, carotenoids and specific lipids..

The protein localises to the plastid. It localises to the chloroplast thylakoid membrane. Functionally, one of the components of the core complex of photosystem II (PSII). It binds chlorophyll and helps catalyze the primary light-induced photochemical processes of PSII. PSII is a light-driven water:plastoquinone oxidoreductase, using light energy to abstract electrons from H(2)O, generating O(2) and a proton gradient subsequently used for ATP formation. The sequence is that of Photosystem II CP47 reaction center protein from Buxus microphylla (Littleleaf boxwood).